Here is a 334-residue protein sequence, read N- to C-terminus: Probable fructose-bisphosphate aldolase class 1 (334 aa).

This sequence belongs to the class I fructose-bisphosphate aldolase family.

The enzyme catalyses beta-D-fructose 1,6-bisphosphate = D-glyceraldehyde 3-phosphate + dihydroxyacetone phosphate. The protein operates within carbohydrate degradation; glycolysis; D-glyceraldehyde 3-phosphate and glycerone phosphate from D-glucose: step 4/4. This chain is Probable fructose-bisphosphate aldolase class 1, found in Xanthomonas campestris pv. campestris (strain ATCC 33913 / DSM 3586 / NCPPB 528 / LMG 568 / P 25).